A 64-amino-acid polypeptide reads, in one-letter code: Micrurotoxin 2 (64 aa).

Cystine bridges form between Cys3–Cys24, Cys6–Cys11, Cys17–Cys41, Cys45–Cys57, and Cys58–Cys63.

Belongs to the three-finger toxin family. Ancestral subfamily. Expressed by the venom gland.

The protein localises to the secreted. Allosteric modulator of the GABA(A) receptor (GABR), possibly increasing receptor affinity for the agonist, thus enhancing receptor opening and macroscopic desensitization. In vivo, intracerebroventricular injection into mice results in periods of reduced basal activity, followed by bursts of intense seizures and death. The polypeptide is Micrurotoxin 2 (Micrurus mipartitus (Red-tailed coral snake)).